The sequence spans 591 residues: Aspartate--tRNA(Asp/Asn) ligase (591 aa).

Residue Glu-175 participates in L-aspartate binding. The aspartate stretch occupies residues 199–202; that stretch reads QQYK. Positions 221 and 450 each coordinate L-aspartate. Position 221 to 223 (221 to 223) interacts with ATP; it reads RDE. Glu-484 provides a ligand contact to ATP. Residue Arg-491 participates in L-aspartate binding. Residue 536 to 539 participates in ATP binding; that stretch reads GVDR.

This sequence belongs to the class-II aminoacyl-tRNA synthetase family. Type 1 subfamily. In terms of assembly, homodimer.

The protein localises to the cytoplasm. The catalysed reaction is tRNA(Asx) + L-aspartate + ATP = L-aspartyl-tRNA(Asx) + AMP + diphosphate. Its function is as follows. Aspartyl-tRNA synthetase with relaxed tRNA specificity since it is able to aspartylate not only its cognate tRNA(Asp) but also tRNA(Asn). Reaction proceeds in two steps: L-aspartate is first activated by ATP to form Asp-AMP and then transferred to the acceptor end of tRNA(Asp/Asn). This chain is Aspartate--tRNA(Asp/Asn) ligase, found in Rhodopseudomonas palustris (strain ATCC BAA-98 / CGA009).